Here is a 119-residue protein sequence, read N- to C-terminus: uncharacterized protein (119 aa).

This is an uncharacterized protein from Escherichia coli (strain K12).